A 340-amino-acid chain; its full sequence is Nucleoid-associated protein PSPA7_4451 (340 aa).

Belongs to the YejK family.

Its subcellular location is the cytoplasm. It is found in the nucleoid. This Pseudomonas paraeruginosa (strain DSM 24068 / PA7) (Pseudomonas aeruginosa (strain PA7)) protein is Nucleoid-associated protein PSPA7_4451.